Consider the following 487-residue polypeptide: NADH-quinone oxidoreductase subunit N (487 aa).

13 helical membrane-spanning segments follow: residues 7-27 (LTLILPEIVMAISAMALILIT), 37-57 (LVSILAAATLGAAAVMVAPAL), 81-101 (FAKILIYLSAIGCLMIAPAFF), 112-132 (PVLVLLATLGMSIMVSAGDLI), 166-186 (FVLGALASGILLYGMSLVYGF), 207-227 (ALFGVIFVLAGLAFKIAAVPF), 237-257 (GAPTPVTTFFATAPKVAAVAL), 276-296 (IVIFAALASIVLGALGAIGQT), 307-327 (INNVGFILIGLAASTVAGLSA), 329-349 (LTYLAIYVVMALGSFVALLML), 373-393 (LAWCLLFLMFSLAGIPPLLGF), 407-427 (DMVLLAALGIAASVIGAFYYI), and 452-472 (VLLILAAVVVSPLGYLLTGWL).

The protein belongs to the complex I subunit 2 family. In terms of assembly, NDH-1 is composed of 14 different subunits. Subunits NuoA, H, J, K, L, M, N constitute the membrane sector of the complex.

Its subcellular location is the cell inner membrane. The catalysed reaction is a quinone + NADH + 5 H(+)(in) = a quinol + NAD(+) + 4 H(+)(out). NDH-1 shuttles electrons from NADH, via FMN and iron-sulfur (Fe-S) centers, to quinones in the respiratory chain. The immediate electron acceptor for the enzyme in this species is believed to be ubiquinone. Couples the redox reaction to proton translocation (for every two electrons transferred, four hydrogen ions are translocated across the cytoplasmic membrane), and thus conserves the redox energy in a proton gradient. The chain is NADH-quinone oxidoreductase subunit N from Erythrobacter litoralis (strain HTCC2594).